Reading from the N-terminus, the 404-residue chain is MHC class I-like protein MILL1 (404 aa).

The N-terminal stretch at 1–30 (MMLSRDLRAEAAVRLWIMFLLLEDLLGACA) is a signal peptide. The alpha-1 stretch occupies residues 59–150 (EVAGPHTLRY…VTGQKGQDKG (92 aa)). Residues Asn98, Asn102, and Asn165 are each glycosylated (N-linked (GlcNAc...) asparagine). Residues 151 to 242 (LHILQATLGC…SLRSEPLDTG (92 aa)) are alpha-2. Cystine bridges form between Cys160–Cys223 and Cys262–Cys322. In terms of domain architecture, Ig-like C1-type spans 224 to 338 (PAQLQRHLAS…GNIEKRAVIV (115 aa)). Positions 243–342 (SPMVIVTFRN…KRAVIVNTVS (100 aa)) are alpha-3. The N-linked (GlcNAc...) asparagine glycan is linked to Asn323. Positions 343–373 (GEKTRQPSTSGVGGRVKKSLWTTMTTAFMVT) are connecting peptide. Residue Ser374 is the site of GPI-anchor amidated serine attachment. Positions 375–404 (WTRKTGGDSTLLLLWWLLFFSTVLAVLTLV) are cleaved as a propeptide — removed in mature form.

Belongs to the MHC class I family. Heterodimer with B2M. As to expression, detected in skin, esophagus, tongue, skin, muscle, uterus, ovary, testis and epididymis.

It localises to the cell membrane. The sequence is that of MHC class I-like protein MILL1 from Rattus norvegicus (Rat).